Here is a 65-residue protein sequence, read N- to C-terminus: Protein translocase subunit SecE (65 aa).

The chain crosses the membrane as a helical span at residues 38–58 (IVIVTVVFFLIFFYALDLGIG).

This sequence belongs to the SecE/SEC61-gamma family. As to quaternary structure, component of the Sec protein translocase complex. Heterotrimer consisting of SecY, SecE and SecG subunits. The heterotrimers can form oligomers, although 1 heterotrimer is thought to be able to translocate proteins. Interacts with the ribosome. Interacts with SecDF, and other proteins may be involved. Interacts with SecA.

Its subcellular location is the cell membrane. Its function is as follows. Essential subunit of the Sec protein translocation channel SecYEG. Clamps together the 2 halves of SecY. May contact the channel plug during translocation. This chain is Protein translocase subunit SecE, found in Staphylococcus carnosus (strain TM300).